Reading from the N-terminus, the 553-residue chain is Dihydroxy-acid dehydratase (553 aa).

Aspartate 78 is a Mg(2+) binding site. Cysteine 119 contributes to the [2Fe-2S] cluster binding site. Residues aspartate 120 and lysine 121 each coordinate Mg(2+). N6-carboxylysine is present on lysine 121. Cysteine 192 provides a ligand contact to [2Fe-2S] cluster. Glutamate 442 is a Mg(2+) binding site. The active-site Proton acceptor is the serine 468.

Belongs to the IlvD/Edd family. Homodimer. The cofactor is [2Fe-2S] cluster. Requires Mg(2+) as cofactor.

The catalysed reaction is (2R)-2,3-dihydroxy-3-methylbutanoate = 3-methyl-2-oxobutanoate + H2O. It carries out the reaction (2R,3R)-2,3-dihydroxy-3-methylpentanoate = (S)-3-methyl-2-oxopentanoate + H2O. It participates in amino-acid biosynthesis; L-isoleucine biosynthesis; L-isoleucine from 2-oxobutanoate: step 3/4. Its pathway is amino-acid biosynthesis; L-valine biosynthesis; L-valine from pyruvate: step 3/4. In terms of biological role, functions in the biosynthesis of branched-chain amino acids. Catalyzes the dehydration of (2R,3R)-2,3-dihydroxy-3-methylpentanoate (2,3-dihydroxy-3-methylvalerate) into 2-oxo-3-methylpentanoate (2-oxo-3-methylvalerate) and of (2R)-2,3-dihydroxy-3-methylbutanoate (2,3-dihydroxyisovalerate) into 2-oxo-3-methylbutanoate (2-oxoisovalerate), the penultimate precursor to L-isoleucine and L-valine, respectively. This chain is Dihydroxy-acid dehydratase, found in Campylobacter hominis (strain ATCC BAA-381 / DSM 21671 / CCUG 45161 / LMG 19568 / NCTC 13146 / CH001A).